We begin with the raw amino-acid sequence, 261 residues long: Carnitinyl-CoA dehydratase (261 aa).

The active-site Nucleophile is Glu111. The active-site Proton acceptor is Glu131.

The protein belongs to the enoyl-CoA hydratase/isomerase family.

The catalysed reaction is (R)-carnitinyl-CoA = crotonobetainyl-CoA + H2O. Its pathway is amine and polyamine metabolism; carnitine metabolism. In terms of biological role, catalyzes the reversible dehydration of L-carnitinyl-CoA to crotonobetainyl-CoA. This Escherichia coli (strain ATCC 8739 / DSM 1576 / NBRC 3972 / NCIMB 8545 / WDCM 00012 / Crooks) protein is Carnitinyl-CoA dehydratase.